Here is a 130-residue protein sequence, read N- to C-terminus: Small ribosomal subunit protein uS9 (130 aa).

The tract at residues 102 to 130 (GFLTRDPRMKERKKYGLKKARRAPQFSKR) is disordered. Positions 111–130 (KERKKYGLKKARRAPQFSKR) are enriched in basic residues.

It belongs to the universal ribosomal protein uS9 family.

This is Small ribosomal subunit protein uS9 from Clostridium novyi (strain NT).